The following is a 287-amino-acid chain: UPF0276 protein ACIAD0933 (287 aa).

The protein belongs to the UPF0276 family.

The protein is UPF0276 protein ACIAD0933 of Acinetobacter baylyi (strain ATCC 33305 / BD413 / ADP1).